Here is a 305-residue protein sequence, read N- to C-terminus: MACILKRKPALAVSFIALCILLLAMRLANDVTFPLLLNCFGQPKTKWIPLSYTLRQPLQTHYGYINVRTQEPLQLNCNHCAVVSNSGQMVGQKVGEEIDRASCIWRMNNAPTKGFEEDVGYMTMVRVVSHTSVPLLLKNPDYFFKEASTTIYVIWGPFRNMRKDGNGIVYNMLKKTVDAYPDAQIYVTTEQRMTYCDGVFKDETGKDRVQSGSYLSTGWFTFILAMDACYSIHVYGMINETYCTTEGYRKVPYHYYEQGKDECNEYLLHEHAPYGGHRFITEKKVFAKWAKKHRIVFTHPNWTVS.

Residues 1-8 (MACILKRK) are Cytoplasmic-facing. Residues 9 to 29 (PALAVSFIALCILLLAMRLAN) traverse the membrane as a helical; Signal-anchor for type II membrane protein segment. Over 30–305 (DVTFPLLLNC…VFTHPNWTVS (276 aa)) the chain is Lumenal. Cys-80 and Cys-229 form a disulfide bridge. N-linked (GlcNAc...) asparagine glycans are attached at residues Asn-239 and Asn-301.

It belongs to the glycosyltransferase 29 family. As to expression, in adults it is highly expressed in spleen, followed by kidney and lesser in lung. Not found in liver and skeletal muscle. In newborns it is abundantly expressed in brain and kidney.

It is found in the golgi apparatus membrane. The catalysed reaction is an alpha-Neu5Ac-(2-&gt;3)-beta-D-Gal-(1-&gt;3)-D-GlcNAc derivative + CMP-N-acetyl-beta-neuraminate = an alpha-Neu5Ac-(2-&gt;3)-beta-D-Gal-(1-&gt;3)-[alpha-Neu5Ac-(2-&gt;6)]-D-GlcNAc derivative + CMP + H(+). It catalyses the reaction a ganglioside GM1b + CMP-N-acetyl-beta-neuraminate = a ganglioside GD1alpha + CMP + H(+). The enzyme catalyses a ganglioside GM1b (d18:1(4E)) + CMP-N-acetyl-beta-neuraminate = a ganglioside GD1alpha (d18:1(4E)) + CMP + H(+). It carries out the reaction a globoside MSGG + CMP-N-acetyl-beta-neuraminate = a globoside DSGG + CMP + H(+). The catalysed reaction is 3-O-[alpha-Neu5Ac-(2-&gt;3)-beta-D-Gal-(1-&gt;3)-alpha-D-GalNAc]-L-Ser-[protein] + CMP-N-acetyl-beta-neuraminate = a 3-O-{alpha-Neu5Ac-(2-&gt;3)-beta-D-Gal-(1-&gt;3)-[alpha-Neu5Ac-(2-&gt;6)]-alpha-D-GalNAc}-L-seryl-[protein] + CMP + H(+). It catalyses the reaction 3-O-[alpha-Neu5Ac-(2-&gt;3)-beta-D-Gal-(1-&gt;3)-alpha-D-GalNAc]-L-Thr-[protein] + CMP-N-acetyl-beta-neuraminate = a 3-O-{alpha-Neu5Ac-(2-&gt;3)-beta-D-Gal-(1-&gt;3)-[alpha-Neu5Ac-(2-&gt;6)]-alpha-D-GalNAc}-L-threonyl-[protein] + CMP + H(+). It functions in the pathway protein modification; protein glycosylation. The protein operates within glycolipid biosynthesis. Functionally, transfers the sialyl group (N-acetyl-alpha-neuraminyl or NeuAc) from CMP-NeuAc to the GalNAc residue on the NeuAc-alpha-2,3-Gal-beta-1,3-GalNAc sequence of glycoproteins and glycolipids forming an alpha-2,6-linkage. Produces branched type disialyl structures by transfer of a sialyl group onto a GalNAc residue inside the backbone core chains. ST6GalNAcIII prefers glycolipids to glycoproteins, predominantly catalyzing the biosynthesis of ganglioside GD1alpha from GM1b. GD1alpha is a critical molecule in the communication and interaction between neuronal cells and their supportive cells, particularly in brain tissues, and functions as an adhesion molecule in the process of metastasis. Sialylation of glycoproteins or glycosphingolipids is very important in tumor development, neuronal development, nerve repair, immunological processes and regulation of hormone sensitivity. The polypeptide is Alpha-N-acetylgalactosaminide alpha-2,6-sialyltransferase 3 (St6galnac3) (Rattus norvegicus (Rat)).